Consider the following 511-residue polypeptide: Protein phosphatase 2C 16 (511 aa).

The signal sequence occupies residues 1 to 22 (MEEMTPAVAMTLSLAANTMCES). In terms of domain architecture, PPM-type phosphatase spans 189-501 (LWGTVSIQGN…DNISIIVIDL (313 aa)). Residues Asp-243, Gly-244, Asp-432, and Asp-492 each coordinate Mn(2+).

The protein belongs to the PP2C family. Interacts with SWI3B (via N-terminus). Interacts with ABA-bounded PYR1, PYL1, PYL2, PYL3, PYL4, PYL5, PYL6, PYL8 and PYL9, and with free PYL2, PYL3, PYL4, PYL10 and PYL13. Mg(2+) is required as a cofactor. Mn(2+) serves as cofactor. Expressed in seeds, roots, stems, leaves and flowers, especially in meristematic tissues, guard cells, embryo and siliques.

It is found in the cytoplasm. It localises to the nucleus. It carries out the reaction O-phospho-L-seryl-[protein] + H2O = L-seryl-[protein] + phosphate. It catalyses the reaction O-phospho-L-threonyl-[protein] + H2O = L-threonyl-[protein] + phosphate. Repressed by PYR/PYL/RCAR ABA receptors in an ABA-dependent manner. In terms of biological role, key component and repressor of the abscisic acid (ABA) signaling pathway that regulates numerous ABA responses, such as stomatal closure, seed germination and inhibition of vegetative growth. Confers enhanced sensitivity to drought. The sequence is that of Protein phosphatase 2C 16 (HAB1) from Arabidopsis thaliana (Mouse-ear cress).